The sequence spans 184 residues: Peptidoglycan-recognition protein SC2 (184 aa).

A signal peptide spans Met-1–Gly-20. An N-acetylmuramoyl-L-alanine amidase domain is found at Ser-45–Gly-169. His-50 provides a ligand contact to Zn(2+). Cys-57 and Cys-63 are oxidised to a cystine. His-159 and Cys-167 together coordinate Zn(2+).

This sequence belongs to the N-acetylmuramoyl-L-alanine amidase 2 family. Requires Zn(2+) as cofactor. In terms of tissue distribution, constitutively expressed at high level in gut, in addition to the induced expression in fat body.

The protein resides in the secreted. It carries out the reaction Hydrolyzes the link between N-acetylmuramoyl residues and L-amino acid residues in certain cell-wall glycopeptides.. Its function is as follows. N-acetylmuramyl-L-alanine amidase involved in innate immunity by degrading bacterial peptidoglycans (PGN). Probably plays a scavenger role by digesting biologically active PGN into biologically inactive fragments. Has no direct bacteriolytic activity. This chain is Peptidoglycan-recognition protein SC2 (PGRP-SC2), found in Drosophila melanogaster (Fruit fly).